A 534-amino-acid chain; its full sequence is Cysteine/serine-rich nuclear protein 2 (534 aa).

M1 is subject to N-acetylmethionine. 2 disordered regions span residues 1–52 (MDAF…FTPT) and 480–534 (DCGL…PLAV). Residues 31–40 (SSDSADSCDS) are compositionally biased toward low complexity. Residues 42–52 (NPPTTASFTPT) are compositionally biased toward polar residues. Residues 480-492 (DCGLKEPESEDLH) show a composition bias toward basic and acidic residues.

The protein belongs to the AXUD1 family. Highest expression detected in thymus, brain and ovary. Low levels detected in naive T-cells.

Its subcellular location is the nucleus. In terms of biological role, binds to the consensus sequence 5'-AGAGTG-3' and has transcriptional activator activity. May play a role in apoptosis. The sequence is that of Cysteine/serine-rich nuclear protein 2 (Csrnp2) from Mus musculus (Mouse).